Here is a 524-residue protein sequence, read N- to C-terminus: Germ cell-less protein-like 1 (524 aa).

Positions 1-37 (MGALSSRVLRPAGRTEQPEPTPGAGGAARRSDAGEDA) are disordered. Positions 47–53 (GRKRKRS) match the Nuclear localization signal motif. The interval 63–83 (DSETDDDEDEGDEQQRLLNTP) is disordered. Ser-64 carries the phosphoserine modification. The span at 65 to 74 (ETDDDEDEGD) shows a compositional bias: acidic residues. At Thr-66 the chain carries Phosphothreonine. Residues 83 to 89 (PRRKKLK) carry the Nuclear localization signal motif. The BTB domain maps to 106 to 176 (SDIKICALGE…LYRDDVLIKP (71 aa)).

In terms of assembly, interacts with TMPO-Beta, TSG101 and TFDP2. Interacts with EMD. As to expression, ubiquitously expressed at low levels throughout development and in adult tissues.

It localises to the nucleus matrix. Its function is as follows. Possible function in spermatogenesis. Enhances the degradation of MDM2 and increases the amount of p53 probably by modulating the nucleocytoplasmic transport. The chain is Germ cell-less protein-like 1 (Gmcl1) from Mus musculus (Mouse).